The chain runs to 437 residues: Serine--tRNA ligase (437 aa).

Position 240–242 (240–242) interacts with L-serine; sequence TAE. 271–273 is an ATP binding site; it reads RAE. Glu-294 lines the L-serine pocket. 358-361 contributes to the ATP binding site; it reads EISS. Ser-394 lines the L-serine pocket.

Belongs to the class-II aminoacyl-tRNA synthetase family. Type-1 seryl-tRNA synthetase subfamily. In terms of assembly, homodimer. The tRNA molecule binds across the dimer.

The protein localises to the cytoplasm. It carries out the reaction tRNA(Ser) + L-serine + ATP = L-seryl-tRNA(Ser) + AMP + diphosphate + H(+). It catalyses the reaction tRNA(Sec) + L-serine + ATP = L-seryl-tRNA(Sec) + AMP + diphosphate + H(+). Its pathway is aminoacyl-tRNA biosynthesis; selenocysteinyl-tRNA(Sec) biosynthesis; L-seryl-tRNA(Sec) from L-serine and tRNA(Sec): step 1/1. Catalyzes the attachment of serine to tRNA(Ser). Is also able to aminoacylate tRNA(Sec) with serine, to form the misacylated tRNA L-seryl-tRNA(Sec), which will be further converted into selenocysteinyl-tRNA(Sec). The sequence is that of Serine--tRNA ligase from Methylobacterium nodulans (strain LMG 21967 / CNCM I-2342 / ORS 2060).